The following is a 101-amino-acid chain: NADH-quinone oxidoreductase subunit K (101 aa).

The next 3 helical transmembrane spans lie at 4–24, 29–49, and 61–81; these read LAHY…GIFL, IIII…NFVA, and IFVF…LAIL.

Belongs to the complex I subunit 4L family. As to quaternary structure, NDH-1 is composed of 14 different subunits. Subunits NuoA, H, J, K, L, M, N constitute the membrane sector of the complex.

Its subcellular location is the cell inner membrane. It carries out the reaction a quinone + NADH + 5 H(+)(in) = a quinol + NAD(+) + 4 H(+)(out). Its function is as follows. NDH-1 shuttles electrons from NADH, via FMN and iron-sulfur (Fe-S) centers, to quinones in the respiratory chain. The immediate electron acceptor for the enzyme in this species is believed to be ubiquinone. Couples the redox reaction to proton translocation (for every two electrons transferred, four hydrogen ions are translocated across the cytoplasmic membrane), and thus conserves the redox energy in a proton gradient. This is NADH-quinone oxidoreductase subunit K from Burkholderia ambifaria (strain MC40-6).